Consider the following 311-residue polypeptide: MNKNKPFIVVIVGPTASGKTELSIELAKRINGEIISGDSMQVYKHMNIGTAKVTPEEMDGIPHHLIDILNPDDTFSAYEFKRLAEDLITDITNRGKVPIIAGGTGLYIQSLIYNYELEDETVTSAQLSVVKQKLSALEHLDNQQLHDYLAQFDEASAKNIHPNNRQRVLRAIEYYFKTKKLLSNRKKVQQFTENYDTLLIGIEMSRKTLYSRINKRVDIMLDHGLFREVQQLVEQGYESCRSMQAIGYKELIPVINGQMIYEDAVNDLKQHSRQYAKRQMTWFKNKMSVHWLDKENMSLQMMLDEITTQIK.

Residue 13–20 (GPTASGKT) participates in ATP binding. 15-20 (TASGKT) serves as a coordination point for substrate. Interaction with substrate tRNA regions lie at residues 38–41 (DSMQ) and 166–170 (QRVLR).

Belongs to the IPP transferase family. As to quaternary structure, monomer. Mg(2+) is required as a cofactor.

It carries out the reaction adenosine(37) in tRNA + dimethylallyl diphosphate = N(6)-dimethylallyladenosine(37) in tRNA + diphosphate. In terms of biological role, catalyzes the transfer of a dimethylallyl group onto the adenine at position 37 in tRNAs that read codons beginning with uridine, leading to the formation of N6-(dimethylallyl)adenosine (i(6)A). This chain is tRNA dimethylallyltransferase, found in Staphylococcus aureus (strain bovine RF122 / ET3-1).